The primary structure comprises 1106 residues: Carbamoyl phosphate synthase large chain (1106 aa).

Positions 1-401 are carboxyphosphate synthetic domain; sequence MPKRNDLNKV…AFLKALRSLE (401 aa). 12 residues coordinate ATP: arginine 129, arginine 169, glycine 175, glycine 176, arginine 208, valine 210, glutamate 215, glycine 241, valine 242, histidine 243, glutamine 284, and glutamate 298. The ATP-grasp 1 domain occupies 133 to 327; that stretch reads KTTMNDIGEP…IARVASKIAI (195 aa). Residues glutamine 284, glutamate 298, and asparagine 300 each contribute to the Mg(2+) site. Mn(2+)-binding residues include glutamine 284, glutamate 298, and asparagine 300. Residues 402 to 577 form an oligomerization domain region; that stretch reads IDLDDLHQSI…YSAYNEENEA (176 aa). The tract at residues 578-964 is carbamoyl phosphate synthetic domain; sequence IPPSEPTHDK…ALYKAMLASG (387 aa). The ATP-grasp 2 domain maps to 706-896; that stretch reads DQLLNKLGID…MVKIATKAMM (191 aa). Residues arginine 742, glutamine 781, leucine 783, glutamate 787, glycine 812, valine 813, histidine 814, serine 815, glutamine 855, and glutamate 867 each coordinate ATP. Mg(2+)-binding residues include glutamine 855, glutamate 867, and asparagine 869. Mn(2+) contacts are provided by glutamine 855, glutamate 867, and asparagine 869. In terms of domain architecture, MGS-like spans 965 to 1106; that stretch reads FSINLNGGVL…LQDYLKELSN (142 aa). Positions 965–1106 are allosteric domain; it reads FSINLNGGVL…LQDYLKELSN (142 aa).

Belongs to the CarB family. Composed of two chains; the small (or glutamine) chain promotes the hydrolysis of glutamine to ammonia, which is used by the large (or ammonia) chain to synthesize carbamoyl phosphate. Tetramer of heterodimers (alpha,beta)4. Mg(2+) serves as cofactor. Requires Mn(2+) as cofactor.

It catalyses the reaction hydrogencarbonate + L-glutamine + 2 ATP + H2O = carbamoyl phosphate + L-glutamate + 2 ADP + phosphate + 2 H(+). It carries out the reaction hydrogencarbonate + NH4(+) + 2 ATP = carbamoyl phosphate + 2 ADP + phosphate + 2 H(+). The protein operates within amino-acid biosynthesis; L-arginine biosynthesis; carbamoyl phosphate from bicarbonate: step 1/1. Its pathway is pyrimidine metabolism; UMP biosynthesis via de novo pathway; (S)-dihydroorotate from bicarbonate: step 1/3. Its function is as follows. Large subunit of the glutamine-dependent carbamoyl phosphate synthetase (CPSase). CPSase catalyzes the formation of carbamoyl phosphate from the ammonia moiety of glutamine, carbonate, and phosphate donated by ATP, constituting the first step of 2 biosynthetic pathways, one leading to arginine and/or urea and the other to pyrimidine nucleotides. The large subunit (synthetase) binds the substrates ammonia (free or transferred from glutamine from the small subunit), hydrogencarbonate and ATP and carries out an ATP-coupled ligase reaction, activating hydrogencarbonate by forming carboxy phosphate which reacts with ammonia to form carbamoyl phosphate. The protein is Carbamoyl phosphate synthase large chain of Natranaerobius thermophilus (strain ATCC BAA-1301 / DSM 18059 / JW/NM-WN-LF).